Here is a 1446-residue protein sequence, read N- to C-terminus: DNA polymerase III PolC-type (1446 aa).

The 157-residue stretch at 425–581 (YVIFDVETTG…ADAESTGYLL (157 aa)) folds into the Exonuclease domain.

This sequence belongs to the DNA polymerase type-C family. PolC subfamily.

Its subcellular location is the cytoplasm. The catalysed reaction is DNA(n) + a 2'-deoxyribonucleoside 5'-triphosphate = DNA(n+1) + diphosphate. Its function is as follows. Required for replicative DNA synthesis. This DNA polymerase also exhibits 3' to 5' exonuclease activity. The sequence is that of DNA polymerase III PolC-type from Latilactobacillus sakei subsp. sakei (strain 23K) (Lactobacillus sakei subsp. sakei).